The primary structure comprises 319 residues: Acetyl esterase (319 aa).

Positions 91–93 match the Involved in the stabilization of the negatively charged intermediate by the formation of the oxyanion hole motif; the sequence is HGG. Residues S165, D262, and H292 contribute to the active site.

Belongs to the 'GDXG' lipolytic enzyme family. Homodimer. Interacts with MalT and MelA.

The protein resides in the cytoplasm. In terms of biological role, displays esterase activity towards short chain fatty esters (acyl chain length of up to 8 carbons). Able to hydrolyze triacetylglycerol (triacetin) and tributyrylglycerol (tributyrin), but not trioleylglycerol (triolein) or cholesterol oleate. Negatively regulates MalT activity by antagonizing maltotriose binding. Inhibits MelA galactosidase activity. This is Acetyl esterase from Escherichia coli O139:H28 (strain E24377A / ETEC).